The primary structure comprises 352 residues: CRISPR-associated endonuclease Cas1 1 (352 aa).

Mn(2+) is bound by residues E207, H274, and E289.

Belongs to the CRISPR-associated endonuclease Cas1 family. Homodimer, forms a heterotetramer with a Cas2 homodimer. Requires Mg(2+) as cofactor. The cofactor is Mn(2+).

Functionally, CRISPR (clustered regularly interspaced short palindromic repeat), is an adaptive immune system that provides protection against mobile genetic elements (viruses, transposable elements and conjugative plasmids). CRISPR clusters contain spacers, sequences complementary to antecedent mobile elements, and target invading nucleic acids. CRISPR clusters are transcribed and processed into CRISPR RNA (crRNA). Acts as a dsDNA endonuclease. Involved in the integration of spacer DNA into the CRISPR cassette. This Saccharolobus solfataricus (strain ATCC 35092 / DSM 1617 / JCM 11322 / P2) (Sulfolobus solfataricus) protein is CRISPR-associated endonuclease Cas1 1.